The following is a 1005-amino-acid chain: Defense-associated sirtuin 2 (1005 aa).

Residues 1–295 (MVKVDLESKR…YSAVMDLLIE (295 aa)) are SIR2. The inter-dimer interaction stretch occupies residues 56 to 111 (YPQWWRLVDKYHEELYGSPKKGNYSSDEYLRIPQIFYNVKGEMAFDGILKDFFQVD). Active-site residues include Y134, D135, and H171. The MID stretch occupies residues 296-548 (SQENKFITKD…YKILEFLSDN (253 aa)). The interval 549-1005 (QFLYDDTVKL…YLEILMNYFI (457 aa)) is CTD.

In terms of assembly, homotetramer (dimer of dimers). Homodimer. The SIR2 domains are arranged in a central core, adopting a head-to-head arrangement, while the CTDs are positioned at the periphery of the complex. Tetramerization is necessary for the activation of NADase activity. The NADase enzymatic activity of this homotetrameric form is autoinhibited. The activated form of DSR2 (after binding to the phage tube protein) exists as tetramers and dimers, with the tetramers exhibiting more NADase activity. Each tetramer binds 4 NAD(+) molecules. As to quaternary structure, (Microbial infection) Interacts (via C-terminus) with phage SPR tail tube monomer protein (via N-terminus) in a 4:4 DSR2-Tube assembly; this interaction induces a conformation change of the tube protein and activates the NADase activity of DSR2. (Microbial infection) Interacts (via C-terminus) with phage SPbeta DSAD1 in a 4:2 ratio; this interaction prevents activation of the NADase defense activity of DSR2.

The enzyme catalyses NAD(+) + H2O = ADP-D-ribose + nicotinamide + H(+). With respect to regulation, (Microbial infection) NADase activity is activated through the binding of SPR phage tail tube monomer protein. NADase activity is inhibited through the binding to the phage SPbeta DSR anti-defense 1 (DSAD1). Anti-phage defense protein that is activated through the binding to the phage tail tube protein monomer and which hydrolyzes NAD+ upon activation (NADase activity). The resulting depletion of NAD(+) leads to an abortive infection. The sequence is that of Defense-associated sirtuin 2 from Bacillus subtilis.